Reading from the N-terminus, the 356-residue chain is Probable L-asparaginase 4 (356 aa).

The first 22 residues, 1–22 (MWGFIVTCGIFLVLLCQLRLLS), serve as a signal peptide directing secretion. The Asparaginase/glutaminase domain occupies 36 to 356 (PNVTVFAMGG…RDIEGLFSIK (321 aa)). N-linked (GlcNAc...) asparagine glycosylation occurs at asparagine 37. The O-isoaspartyl threonine intermediate role is filled by threonine 46. N-linked (GlcNAc...) asparagine glycosylation occurs at asparagine 52. Residues serine 93 and 126 to 127 (TD) each bind substrate. Asparagine 176 carries N-linked (GlcNAc...) asparagine glycosylation.

This sequence belongs to the asparaginase 1 family.

Its subcellular location is the secreted. The protein localises to the cell wall. It carries out the reaction L-asparagine + H2O = L-aspartate + NH4(+). The sequence is that of Probable L-asparaginase 4 from Schizosaccharomyces pombe (strain 972 / ATCC 24843) (Fission yeast).